A 422-amino-acid chain; its full sequence is Glutamate-1-semialdehyde 2,1-aminomutase (422 aa).

The residue at position 258 (Lys258) is an N6-(pyridoxal phosphate)lysine.

This sequence belongs to the class-III pyridoxal-phosphate-dependent aminotransferase family. HemL subfamily. In terms of assembly, homodimer. Pyridoxal 5'-phosphate serves as cofactor.

The protein localises to the cytoplasm. The enzyme catalyses (S)-4-amino-5-oxopentanoate = 5-aminolevulinate. It functions in the pathway porphyrin-containing compound metabolism; protoporphyrin-IX biosynthesis; 5-aminolevulinate from L-glutamyl-tRNA(Glu): step 2/2. The protein is Glutamate-1-semialdehyde 2,1-aminomutase of Chlamydia trachomatis serovar L2 (strain ATCC VR-902B / DSM 19102 / 434/Bu).